A 290-amino-acid chain; its full sequence is 4-hydroxy-tetrahydrodipicolinate synthase (290 aa).

Position 44 (Thr44) interacts with pyruvate. Residue Tyr132 is the Proton donor/acceptor of the active site. The Schiff-base intermediate with substrate role is filled by Lys160. Ile202 contributes to the pyruvate binding site.

The protein belongs to the DapA family. Homotetramer; dimer of dimers.

Its subcellular location is the cytoplasm. It catalyses the reaction L-aspartate 4-semialdehyde + pyruvate = (2S,4S)-4-hydroxy-2,3,4,5-tetrahydrodipicolinate + H2O + H(+). It participates in amino-acid biosynthesis; L-lysine biosynthesis via DAP pathway; (S)-tetrahydrodipicolinate from L-aspartate: step 3/4. In terms of biological role, catalyzes the condensation of (S)-aspartate-beta-semialdehyde [(S)-ASA] and pyruvate to 4-hydroxy-tetrahydrodipicolinate (HTPA). This Geobacter sulfurreducens (strain ATCC 51573 / DSM 12127 / PCA) protein is 4-hydroxy-tetrahydrodipicolinate synthase.